The following is a 187-amino-acid chain: Flavin-dependent monooxygenase, reductase subunit HsaB (187 aa).

FAD-binding positions include 32–36 (PVGFA), 38–39 (QS), 53–55 (CPT), 59–60 (RS), and 85–86 (RF). An NAD(+)-binding site is contributed by 152–155 (FYRG).

It belongs to the non-flavoprotein flavin reductase family. HsaAB monooxygenase consists of an oxygenase component HsaA and a reductase component HsaB.

The catalysed reaction is a reduced flavin + NAD(+) = an oxidized flavin + NADH + 2 H(+). It functions in the pathway lipid metabolism; steroid biosynthesis. Catalyzes the reduction of free flavins (FMN or FAD) by NADH. Subsequently, the reduced flavins diffuse to the HsaA oxygenase subunit. The polypeptide is Flavin-dependent monooxygenase, reductase subunit HsaB (hsaB) (Mycobacterium tuberculosis (strain CDC 1551 / Oshkosh)).